Consider the following 278-residue polypeptide: Checkpoint protein Hus1-like (278 aa).

This sequence belongs to the HUS1 family. Component of the 9-1-1 checkpoint clamp complex consisting of Rad9 isoform A, Rad1 and Hus1-like; the interactions with Rad1 and Rad9 are direct. This complex probably also forms with Rad9 isoform B, however 9-1-1 complex containing Rad9 isoform A localizes to the nuclear periphery. As to expression, expressed in ovary.

The protein resides in the cytoplasm. It is found in the nucleus envelope. Functionally, component of the 9-1-1 checkpoint clamp complex. Involved in both meiotic and somatic DNA damage responses. Essential for activation of the meiotic checkpoint in response to double-strand DNA breaks; required for the S-phase checkpoint but not the G2-M phase checkpoint. Involved in double strand break repair by homologous recombination during meiosis; influences the organization of chromosomal DNA in the meiotic nucleus. This Drosophila melanogaster (Fruit fly) protein is Checkpoint protein Hus1-like.